The following is a 178-amino-acid chain: MDSQEPIILEKSIKIEEVIKIANTSIIDIVTKTVTPEIKAPYELVDVEYDKMGSDYILSILVDKEGGITVEDTSDLTNIISPLLDTIDPDPFPNQYMLEVSSPGLERPLKTADSLKAAVGSYINVSLYQAIDKVKVFQGDLLAFDGETLTIDYLDKTRHKIVNIPYQAVAKVRMAVKL.

This sequence belongs to the RimP family.

The protein localises to the cytoplasm. Its function is as follows. Required for maturation of 30S ribosomal subunits. In Streptococcus pyogenes serotype M18 (strain MGAS8232), this protein is Ribosome maturation factor RimP.